The sequence spans 292 residues: Elongation factor Ts (292 aa).

Positions 79-82 (TDFV) are involved in Mg(2+) ion dislocation from EF-Tu.

This sequence belongs to the EF-Ts family.

It is found in the cytoplasm. In terms of biological role, associates with the EF-Tu.GDP complex and induces the exchange of GDP to GTP. It remains bound to the aminoacyl-tRNA.EF-Tu.GTP complex up to the GTP hydrolysis stage on the ribosome. This chain is Elongation factor Ts, found in Xanthomonas campestris pv. campestris (strain B100).